The primary structure comprises 223 residues: Probable transaldolase (223 aa).

Residue lysine 83 is the Schiff-base intermediate with substrate of the active site.

It belongs to the transaldolase family. Type 3B subfamily.

The protein localises to the cytoplasm. The catalysed reaction is D-sedoheptulose 7-phosphate + D-glyceraldehyde 3-phosphate = D-erythrose 4-phosphate + beta-D-fructose 6-phosphate. It participates in carbohydrate degradation; pentose phosphate pathway; D-glyceraldehyde 3-phosphate and beta-D-fructose 6-phosphate from D-ribose 5-phosphate and D-xylulose 5-phosphate (non-oxidative stage): step 2/3. In terms of biological role, transaldolase is important for the balance of metabolites in the pentose-phosphate pathway. The sequence is that of Probable transaldolase from Myxococcus xanthus (strain DK1622).